Here is a 233-residue protein sequence, read N- to C-terminus: Defense protein 3 (233 aa).

The first 17 residues, 1 to 17 (MFGKFVLLAVLLVGVNS), serve as a signal peptide directing secretion. The propeptide occupies 18 to 45 (RYVIIEDPVYYIEDHELPEQWTSSRVRR).

This sequence belongs to the attacin/sarcotoxin-2 family.

Its subcellular location is the secreted. In terms of biological role, has antibacterial activity against both Gram-positive and Gram-negative bacteria. The sequence is that of Defense protein 3 from Lonomia obliqua (Moth).